A 185-amino-acid chain; its full sequence is Probable DNA-directed RNA polymerase subunit delta (185 aa).

Positions 14 to 81 constitute an HTH HARE-type domain; it reads LSMIEVAHAI…GDNTWGLRAW (68 aa). Residues 90 to 185 form a disordered region; it reads ATVGENEEDE…DEEDEDEDDE (96 aa). Acidic residues-rich tracts occupy residues 117–167 and 175–185; these read DTDD…DDGI and HDEEDEDEDDE.

It belongs to the RpoE family. RNAP is composed of a core of 2 alpha, a beta and a beta' subunits. The core is associated with a delta subunit and one of several sigma factors.

Its function is as follows. Participates in both the initiation and recycling phases of transcription. In the presence of the delta subunit, RNAP displays an increased specificity of transcription, a decreased affinity for nucleic acids, and an increased efficiency of RNA synthesis because of enhanced recycling. This is Probable DNA-directed RNA polymerase subunit delta from Limosilactobacillus reuteri (strain DSM 20016) (Lactobacillus reuteri).